Here is a 189-residue protein sequence, read N- to C-terminus: Peptidyl-tRNA hydrolase (189 aa).

Residue tyrosine 15 coordinates tRNA. Histidine 20 functions as the Proton acceptor in the catalytic mechanism. 3 residues coordinate tRNA: phenylalanine 66, asparagine 68, and asparagine 114.

Belongs to the PTH family. Monomer.

It is found in the cytoplasm. It catalyses the reaction an N-acyl-L-alpha-aminoacyl-tRNA + H2O = an N-acyl-L-amino acid + a tRNA + H(+). Functionally, hydrolyzes ribosome-free peptidyl-tRNAs (with 1 or more amino acids incorporated), which drop off the ribosome during protein synthesis, or as a result of ribosome stalling. Catalyzes the release of premature peptidyl moieties from peptidyl-tRNA molecules trapped in stalled 50S ribosomal subunits, and thus maintains levels of free tRNAs and 50S ribosomes. The sequence is that of Peptidyl-tRNA hydrolase from Streptococcus thermophilus (strain CNRZ 1066).